Reading from the N-terminus, the 322-residue chain is uncharacterized protein (322 aa).

The span at methionine 1–glutamate 13 shows a compositional bias: polar residues. Disordered regions lie at residues methionine 1–glutamate 94 and arginine 125–glutamate 322. The span at glycine 14–threonine 31 shows a compositional bias: low complexity. The span at glutamine 32 to threonine 50 shows a compositional bias: polar residues. A compositionally biased stretch (acidic residues) spans glutamate 64 to glutamate 75. 4 stretches are compositionally biased toward basic and acidic residues: residues glycine 141–aspartate 227, arginine 235–aspartate 269, arginine 277–aspartate 295, and alanine 308–glutamate 322.

This is an uncharacterized protein from Deinococcus radiodurans (strain ATCC 13939 / DSM 20539 / JCM 16871 / CCUG 27074 / LMG 4051 / NBRC 15346 / NCIMB 9279 / VKM B-1422 / R1).